The following is a 529-amino-acid chain: Polygalacturonase (529 aa).

A signal peptide spans 1–21 (MNHRYTLLALAAAALSAGAHA). Catalysis depends on Asp-305, which acts as the Proton donor. Residue His-331 is part of the active site. Residues 516-529 (AFVPLKSVAPTSPI) form a required for PGA export across the outer membrane and catalytic activity region.

This sequence belongs to the glycosyl hydrolase 28 family. Monomer.

It is found in the secreted. It catalyses the reaction (1,4-alpha-D-galacturonosyl)n+m + H2O = (1,4-alpha-D-galacturonosyl)n + (1,4-alpha-D-galacturonosyl)m.. Contributes to the wilt disease production on tomato. This is Polygalacturonase (pglA) from Ralstonia solanacearum (Pseudomonas solanacearum).